Reading from the N-terminus, the 137-residue chain is Crustacean hyperglycemic hormones (137 aa).

Residues 1–28 (MVSFRTMWSLVVVVVVVAASLGSSGVHG) form the signal peptide. Gln64 carries the post-translational modification Pyrrolidone carboxylic acid. A D-phenylalanine; in form CHH-II modification is found at Phe66. Cystine bridges form between Cys70–Cys106, Cys86–Cys102, and Cys89–Cys115. Val135 carries the valine amide modification.

It belongs to the arthropod CHH/MIH/GIH/VIH hormone family. As to expression, produced by the medulla terminalis X-organ in the eyestalks and transported to the sinus gland where they are stored and released.

The protein resides in the secreted. In terms of biological role, hormone found in the sinus gland of isopods and decapods which controls the blood sugar level. Has a secretagogue action over the amylase released from the midgut gland. May act as a stress hormone and may be involved in the control of molting and reproduction. In Procambarus clarkii (Red swamp crayfish), this protein is Crustacean hyperglycemic hormones.